The chain runs to 549 residues: MLRISRDTKIVARVTHVTKSRTYATSTAPKLVVGLEIHTQLLTKRKLFSSTTVPSLSTTPNTKVSYFDAALPGTQPRLNPQALLLALKAAIALRCDVKELTAFDRKHYFYPDQPAGYQITQHRKPLAINGKLKLNWWDLYSQNEWPALLAKEANTDSADTRDLASRSIDVPILQIQLEQDTGKSTYHGSETLVDLNRTNMPLIEIVTAPVIHTASHAAAFVKKLQTLLKRIGVSTGEFESGAMRVDVNVSIGEDGERCEIKNLPNTSSIEAAIEAEYNRQVELVGKGGTVEKSTMGFDGKKTFILRSKENAVDYRYMPDPELPLIRLSKGTLLKVRDSLPELPDKVFSRLTDDPYYVTTKDALTLIHVAGLSDYYFEVFERVSEETEDAKALKQPVNWVVNELLGRVRKADEARAAESAESGEPDLGAHDYNSIYPPAKLAELILAVHNHQLTLPSARLLFQHFLANPEDLKNMTIEQAITEFELGESGDVVDACRQVINEHESVVKSVKDGSKPGSIKFLIGMVMKATQGRINPAVIERQLKTEMRHM.

The transit peptide at Met1–Tyr23 directs the protein to the mitochondrion.

Belongs to the GatB/GatE family. GatB subfamily. In terms of assembly, subunit of the heterotrimeric GatFAB amidotransferase (AdT) complex, composed of A, B and F subunits.

The protein localises to the mitochondrion. The catalysed reaction is L-glutamyl-tRNA(Gln) + L-glutamine + ATP + H2O = L-glutaminyl-tRNA(Gln) + L-glutamate + ADP + phosphate + H(+). In terms of biological role, allows the formation of correctly charged Gln-tRNA(Gln) through the transamidation of misacylated Glu-tRNA(Gln) in the mitochondria. The reaction takes place in the presence of glutamine and ATP through an activated gamma-phospho-Glu-tRNA(Gln). The polypeptide is Glutamyl-tRNA(Gln) amidotransferase subunit B, mitochondrial (Yarrowia lipolytica (strain CLIB 122 / E 150) (Yeast)).